The primary structure comprises 577 residues: Isocitrate dehydrogenase kinase/phosphatase (577 aa).

Residues A324–L330 and K345 each bind ATP. The active site involves D380.

Belongs to the AceK family.

It is found in the cytoplasm. It carries out the reaction L-seryl-[isocitrate dehydrogenase] + ATP = O-phospho-L-seryl-[isocitrate dehydrogenase] + ADP + H(+). Functionally, bifunctional enzyme which can phosphorylate or dephosphorylate isocitrate dehydrogenase (IDH) on a specific serine residue. This is a regulatory mechanism which enables bacteria to bypass the Krebs cycle via the glyoxylate shunt in response to the source of carbon. When bacteria are grown on glucose, IDH is fully active and unphosphorylated, but when grown on acetate or ethanol, the activity of IDH declines drastically concomitant with its phosphorylation. In Pseudoalteromonas atlantica (strain T6c / ATCC BAA-1087), this protein is Isocitrate dehydrogenase kinase/phosphatase.